A 578-amino-acid chain; its full sequence is Raftlin (578 aa).

The N-myristoyl glycine moiety is linked to residue Gly-2. Residue Cys-3 is the site of S-palmitoyl cysteine attachment. Residues 169 to 184 (VNSAGSSAPVSTANST) show a composition bias toward polar residues. 3 disordered regions span residues 169–271 (VNSA…VHEE), 449–525 (FSRE…PGGL), and 551–578 (CTGH…VEEN). A phosphoserine mark is found at Ser-183, Ser-199, and Ser-220. Positions 185–206 (EDARDAKNARGDHASLENEKPG) are enriched in basic and acidic residues. Residues 457–466 (RQMRKSKGKL) are compositionally biased toward basic residues. Over residues 467–485 (SARDKQQAEENEKNLEDQS) the composition is skewed to basic and acidic residues. Ser-505 is modified (phosphoserine). Composition is skewed to basic and acidic residues over residues 506–518 (EEMK…DKGE) and 557–578 (PGED…VEEN).

The protein belongs to the raftlin family. As to quaternary structure, interacts with TLR4; the interaction occurs in response to lipopolysaccharide stimulation. Interacts with CLTC; the interaction occurs in response to pathogens. Interacts with AP2A1 and AP2B1. Expressed in B-cells (at protein level). Expressed in dendritic cells and macrophages.

Its subcellular location is the cell membrane. The protein resides in the cytoplasm. It is found in the membrane raft. The protein localises to the endosome. It localises to the early endosome. Functionally, involved in protein trafficking via association with clathrin and AP2 complex. Upon bacterial lipopolysaccharide stimulation, mediates internalization of TLR4 to endosomes in dendritic cells and macrophages; and internalization of poly(I:C) to TLR3-positive endosomes in myeloid dendritic cells and epithelial cells; resulting in activation of TICAM1-mediated signaling and subsequent IFNB1 production. Involved in T-cell antigen receptor-mediated signaling by regulating tyrosine kinase LCK localization, T-cell dependent antibody production and cytokine secretion. May regulate B-cell antigen receptor-mediated signaling. May play a pivotal role in the formation and/or maintenance of lipid rafts. The polypeptide is Raftlin (RFTN1) (Homo sapiens (Human)).